The following is a 106-amino-acid chain: SH3 domain-binding glutamic acid-rich-like protein 2 (106 aa).

Residues 61–67 (QGNPLPP) carry the SH3-binding motif.

This sequence belongs to the SH3BGR family.

The protein localises to the nucleus. The polypeptide is SH3 domain-binding glutamic acid-rich-like protein 2 (sh3bgrl2) (Xenopus tropicalis (Western clawed frog)).